Consider the following 388-residue polypeptide: Cytochrome b (388 aa).

The next 4 helical transmembrane spans lie at 38 to 58 (FGCL…FLAM), 82 to 104 (WLLR…LHIF), 119 to 139 (VWCL…IGYV), and 185 to 205 (FFSL…LHLA). Heme b is bound by residues His-88 and His-102. The heme b site is built by His-189 and His-203. His-208 provides a ligand contact to a ubiquinone. A run of 4 helical transmembrane segments spans residues 231 to 251 (FYVK…IWIF), 295 to 315 (AGGV…PFFK), 327 to 347 (IHQG…WIGC), and 354 to 373 (FVTI…AITP).

This sequence belongs to the cytochrome b family. In terms of assembly, the main subunits of complex b-c1 are: cytochrome b, cytochrome c1 and the Rieske protein. Heme b is required as a cofactor.

The protein resides in the mitochondrion inner membrane. Functionally, component of the ubiquinol-cytochrome c reductase complex (complex III or cytochrome b-c1 complex) that is part of the mitochondrial respiratory chain. The b-c1 complex mediates electron transfer from ubiquinol to cytochrome c. Contributes to the generation of a proton gradient across the mitochondrial membrane that is then used for ATP synthesis. This is Cytochrome b (MT-CYB) from Zea mays (Maize).